The sequence spans 67 residues: Inosine/xanthosine triphosphatase (67 aa).

Belongs to the YjjX NTPase family. In terms of assembly, homodimer. Requires Mg(2+) as cofactor. Mn(2+) is required as a cofactor.

The enzyme catalyses XTP + H2O = XDP + phosphate + H(+). It catalyses the reaction ITP + H2O = IDP + phosphate + H(+). In terms of biological role, phosphatase that hydrolyzes non-canonical purine nucleotides such as XTP and ITP to their respective diphosphate derivatives. Probably excludes non-canonical purines from DNA/RNA precursor pool, thus preventing their incorporation into DNA/RNA and avoiding chromosomal lesions. The sequence is that of Inosine/xanthosine triphosphatase from Enterobacter cloacae.